Consider the following 316-residue polypeptide: Phosphate acyltransferase (316 aa).

It belongs to the PlsX family. As to quaternary structure, homodimer. Probably interacts with PlsY.

It localises to the cytoplasm. It catalyses the reaction a fatty acyl-[ACP] + phosphate = an acyl phosphate + holo-[ACP]. It participates in lipid metabolism; phospholipid metabolism. In terms of biological role, catalyzes the reversible formation of acyl-phosphate (acyl-PO(4)) from acyl-[acyl-carrier-protein] (acyl-ACP). This enzyme utilizes acyl-ACP as fatty acyl donor, but not acyl-CoA. The protein is Phosphate acyltransferase of Chlamydia caviae (strain ATCC VR-813 / DSM 19441 / 03DC25 / GPIC) (Chlamydophila caviae).